We begin with the raw amino-acid sequence, 376 residues long: Probable low-specificity L-threonine aldolase (376 aa).

Over residues 1–21 (MSGSVTSTTTETRLCPSNQGS) the composition is skewed to polar residues. Positions 1 to 22 (MSGSVTSTTTETRLCPSNQGSA) are disordered. Lys-226 bears the N6-(pyridoxal phosphate)lysine mark.

Belongs to the threonine aldolase family. As to quaternary structure, homotetramer. It depends on pyridoxal 5'-phosphate as a cofactor.

The catalysed reaction is L-threonine = acetaldehyde + glycine. It catalyses the reaction L-allo-threonine = acetaldehyde + glycine. The protein operates within amino-acid degradation; L-threonine degradation via aldolase pathway; acetaldehyde and glycine from L-threonine: step 1/1. In Schizosaccharomyces pombe (strain 972 / ATCC 24843) (Fission yeast), this protein is Probable low-specificity L-threonine aldolase (gly1).